The following is an 87-amino-acid chain: Small ribosomal subunit protein bS16 (87 aa).

This sequence belongs to the bacterial ribosomal protein bS16 family.

This is Small ribosomal subunit protein bS16 from Psychrobacter sp. (strain PRwf-1).